Reading from the N-terminus, the 242-residue chain is Ribose-5-phosphate isomerase A (242 aa).

Substrate is bound by residues 39-42 (SGST), 95-98 (DGAD), and 108-111 (KGGG). The active-site Proton acceptor is E117. Substrate is bound at residue K135.

It belongs to the ribose 5-phosphate isomerase family. As to quaternary structure, homodimer.

It carries out the reaction aldehydo-D-ribose 5-phosphate = D-ribulose 5-phosphate. The protein operates within carbohydrate degradation; pentose phosphate pathway; D-ribose 5-phosphate from D-ribulose 5-phosphate (non-oxidative stage): step 1/1. Functionally, catalyzes the reversible conversion of ribose-5-phosphate to ribulose 5-phosphate. The chain is Ribose-5-phosphate isomerase A from Chlamydia trachomatis serovar A (strain ATCC VR-571B / DSM 19440 / HAR-13).